A 112-amino-acid chain; its full sequence is Secretoglobin family 2B member 24 (112 aa).

A signal peptide spans 1-23; that stretch reads MKGTLLLLALLMIGELGFHTTEA.

The protein belongs to the secretoglobin family. In terms of tissue distribution, expressed in lacrimal gland, at higher level in males than females.

Its subcellular location is the secreted. In Mus musculus (Mouse), this protein is Secretoglobin family 2B member 24 (Scgb2b24).